We begin with the raw amino-acid sequence, 77 residues long: Subtilisin-chymotrypsin inhibitor CI-1C (77 aa).

Belongs to the protease inhibitor I13 (potato type I serine protease inhibitor) family.

Its function is as follows. Inhibits both subtilisin and chymotrypsin. The polypeptide is Subtilisin-chymotrypsin inhibitor CI-1C (Hordeum vulgare (Barley)).